Consider the following 191-residue polypeptide: Protein GrpE (191 aa).

Residues methionine 1–glutamate 21 show a composition bias toward basic and acidic residues. The disordered stretch occupies residues methionine 1–valine 39. The span at aspartate 22–aspartate 38 shows a compositional bias: acidic residues.

The protein belongs to the GrpE family. As to quaternary structure, homodimer.

The protein resides in the cytoplasm. Its function is as follows. Participates actively in the response to hyperosmotic and heat shock by preventing the aggregation of stress-denatured proteins, in association with DnaK and GrpE. It is the nucleotide exchange factor for DnaK and may function as a thermosensor. Unfolded proteins bind initially to DnaJ; upon interaction with the DnaJ-bound protein, DnaK hydrolyzes its bound ATP, resulting in the formation of a stable complex. GrpE releases ADP from DnaK; ATP binding to DnaK triggers the release of the substrate protein, thus completing the reaction cycle. Several rounds of ATP-dependent interactions between DnaJ, DnaK and GrpE are required for fully efficient folding. This chain is Protein GrpE, found in Tetragenococcus halophilus (Pediococcus halophilus).